The following is a 497-amino-acid chain: Ammonium transporter Rh type C (497 aa).

Residues 1–9 lie on the Cytoplasmic side of the membrane; it reads MAWNTNLRG. A helical transmembrane segment spans residues 10 to 30; that stretch reads RLPITCLILQVTMVVLFGVFV. Residues 31-61 are Extracellular-facing; sequence RYDIQADAHWWLEKKRKNISSDVENEFYYRY. An N-linked (GlcNAc...) asparagine glycan is attached at asparagine 48. A helical membrane pass occupies residues 62-82; the sequence is PSFEDVHAMVFVGFGFLMTYL. Topologically, residues 83-93 are cytoplasmic; that stretch reads QRYGFSAVGFN. The chain crosses the membrane as a helical span at residues 94–114; that stretch reads FLLAAFGIQWALLMQGWFHFF. At 115–125 the chain is on the extracellular side; sequence EEGHILLSVEN. Residues 126–145 form a helical membrane-spanning segment; it reads LIQADFCVASTCVAFGAVLG. At 146–151 the chain is on the cytoplasmic side; that stretch reads KISPMQ. A helical transmembrane segment spans residues 152–174; that stretch reads LLIMTFFQVTLFTVNEFILLNLI. At 175 to 179 the chain is on the extracellular side; sequence EAKDA. The chain crosses the membrane as a helical span at residues 180–200; the sequence is GGSMTIHTFGAYFGLTVTWIL. The Cytoplasmic segment spans residues 201–219; the sequence is YRKNLEQSKQRQSSVYHSD. Residues 220–240 form a helical membrane-spanning segment; it reads LFAMIGTLFLWIYWPSFNSAS. Over 241 to 251 the chain is Extracellular; sequence SFHGDTQHRAA. Residues 252 to 272 traverse the membrane as a helical segment; it reads LNTYLSLAASVLTTVAVSSVI. Topologically, residues 273-282 are cytoplasmic; sequence HKKGKLDMVH. A helical membrane pass occupies residues 283 to 303; that stretch reads IQNATLAGGVGVGTAAEMMLT. Proline 304 is a topological domain (extracellular). The chain crosses the membrane as a helical span at residues 305–325; sequence YGALIVGFFCGILSTLGFAYL. The Cytoplasmic segment spans residues 326-340; the sequence is SPFLESRLRIQDTCG. The helical transmembrane segment at 341–361 threads the bilayer; sequence IHNLHGIPGIIGGIVGAVTAA. Residues 362–395 lie on the Extracellular side of the membrane; the sequence is YSSPDVYGEPGIVHSFGFGGYKADWTKRMQGRSQ. The helical transmembrane segment at 396 to 416 threads the bilayer; sequence IFGLLLSLAMALVGGIIVGFI. The Cytoplasmic segment spans residues 417–497; that stretch reads LKLPFWGQAS…ATVTSSSLVH (81 aa).

It belongs to the ammonium transporter (TC 2.A.49) family. Rh subfamily. In terms of assembly, homotrimer. Post-translationally, N-glycosylated. In terms of tissue distribution, expressed by connecting tubule cells and intercalated cells of the collecting duct in kidney (at protein level).

It is found in the cell membrane. Its subcellular location is the apical cell membrane. It catalyses the reaction NH4(+)(in) = NH4(+)(out). The catalysed reaction is methylamine(out) = methylamine(in). The enzyme catalyses CO2(out) = CO2(in). Functionally, ammonium transporter involved in the maintenance of acid-base homeostasis. Transports ammonium and its related derivative methylammonium across the plasma membrane of epithelial cells likely contributing to renal transepithelial ammonia transport and ammonia metabolism. Postulated to primarily mediate an electroneutral bidirectional transport of NH3 ammonia species according to a mechanism that implies interaction of an NH4(+) ion with acidic residues of the pore entry followed by dissociation of NH4(+) into NH3 and H(+). As a result NH3 transits through the central pore and is protonated on the extracellular side reforming NH4(+). May act as a CO2 channel providing for renal acid secretion. This Rattus norvegicus (Rat) protein is Ammonium transporter Rh type C (Rhcg).